Consider the following 304-residue polypeptide: Aspartate carbamoyltransferase catalytic subunit (304 aa).

Arg53 and Thr54 together coordinate carbamoyl phosphate. Lys82 serves as a coordination point for L-aspartate. Carbamoyl phosphate is bound by residues Arg103, His131, and Gln134. L-aspartate contacts are provided by Arg163 and Arg224. Residues Leu263 and Pro264 each contribute to the carbamoyl phosphate site.

The protein belongs to the aspartate/ornithine carbamoyltransferase superfamily. ATCase family. Heterooligomer of catalytic and regulatory chains.

The catalysed reaction is carbamoyl phosphate + L-aspartate = N-carbamoyl-L-aspartate + phosphate + H(+). The protein operates within pyrimidine metabolism; UMP biosynthesis via de novo pathway; (S)-dihydroorotate from bicarbonate: step 2/3. Catalyzes the condensation of carbamoyl phosphate and aspartate to form carbamoyl aspartate and inorganic phosphate, the committed step in the de novo pyrimidine nucleotide biosynthesis pathway. In Haloquadratum walsbyi (strain DSM 16790 / HBSQ001), this protein is Aspartate carbamoyltransferase catalytic subunit.